The primary structure comprises 310 residues: AA9 family lytic polysaccharide monooxygenase A (310 aa).

Positions 1-21 (MPSTKVAALSAVLALASTVAG) are cleaved as a signal peptide. Cu(2+) is bound by residues H22 and H107. Disulfide bonds link C77-C199 and C118-C122. N121 and N159 each carry an N-linked (GlcNAc...) asparagine glycan. Residue H185 participates in O2 binding. Residue Y196 participates in Cu(2+) binding.

The protein belongs to the polysaccharide monooxygenase AA9 family. The cofactor is Cu(2+).

The protein localises to the secreted. The catalysed reaction is [(1-&gt;4)-beta-D-glucosyl]n+m + reduced acceptor + O2 = 4-dehydro-beta-D-glucosyl-[(1-&gt;4)-beta-D-glucosyl]n-1 + [(1-&gt;4)-beta-D-glucosyl]m + acceptor + H2O.. Functionally, lytic polysaccharide monooxygenase (LPMO) that depolymerizes crystalline and amorphous polysaccharides via the oxidation of scissile alpha- or beta-(1-4)-glycosidic bonds, yielding C1, C4 as well as C6 oxidation products. Catalysis by LPMOs requires the reduction of the active-site copper from Cu(II) to Cu(I) by a reducing agent and H(2)O(2) or O(2) as a cosubstrate. Active on cellulose, but not on xylan, starch, or chitin. This chain is AA9 family lytic polysaccharide monooxygenase A, found in Talaromyces pinophilus (Penicillium pinophilum).